We begin with the raw amino-acid sequence, 253 residues long: Large ribosomal subunit protein uL2C (253 aa).

Belongs to the universal ribosomal protein uL2 family. In terms of assembly, component of the large ribosomal subunit (LSU). Mature yeast ribosomes consist of a small (40S) and a large (60S) subunit. The 40S small subunit contains 1 molecule of ribosomal RNA (18S rRNA) and at least 33 different proteins. The large 60S subunit contains 3 rRNA molecules (25S, 5.8S and 5S rRNA) and at least 46 different proteins.

The protein localises to the cytoplasm. Its subcellular location is the nucleus. Its function is as follows. Component of the ribosome, a large ribonucleoprotein complex responsible for the synthesis of proteins in the cell. The small ribosomal subunit (SSU) binds messenger RNAs (mRNAs) and translates the encoded message by selecting cognate aminoacyl-transfer RNA (tRNA) molecules. The large subunit (LSU) contains the ribosomal catalytic site termed the peptidyl transferase center (PTC), which catalyzes the formation of peptide bonds, thereby polymerizing the amino acids delivered by tRNAs into a polypeptide chain. The nascent polypeptides leave the ribosome through a tunnel in the LSU and interact with protein factors that function in enzymatic processing, targeting, and the membrane insertion of nascent chains at the exit of the ribosomal tunnel. The protein is Large ribosomal subunit protein uL2C (rpl803) of Schizosaccharomyces pombe (strain 972 / ATCC 24843) (Fission yeast).